Here is a 162-residue protein sequence, read N- to C-terminus: Gas vesicle protein I (162 aa).

A disordered region spans residues 1–162 (MTGKQHQKHE…AERQRGGADE (162 aa)). Composition is skewed to basic and acidic residues over residues 22–37 (INRD…QREK) and 47–64 (RQSE…HDTQ). Composition is skewed to polar residues over residues 65-74 (SETQRGTQSK) and 81-110 (TGGT…SHST). Basic and acidic residues-rich tracts occupy residues 122–142 (ARER…EDKS) and 151–162 (PKAERQRGGADE).

It belongs to the gas vesicle GvpI family. GvpF to GvpM interact with each other in vitro, and may form multi-subunit complex(es). Interacts with GvpC and GvpO.

Its subcellular location is the gas vesicle. Its function is as follows. Proteins GvpF to GvpM might be involved in nucleating gas vesicle formation. A minor component of the gas vesicle. Gas vesicles are hollow, gas filled proteinaceous nanostructures found in some microorganisms. They allow positioning of halobacteria at the optimal depth for growth in the poorly aerated, shallow brine pools of their habitat. Functionally, expression of a 9.5 kb mc-vac DNA fragment containing 2 divergently transcribed regions (gvpD-gvpE-gvpF-gvpG-gvpH-gvpI-gvpJ-gvpK-gvpL-gvpM and gvpA-gvpC-gvpN-gvpO) allows H.volcanii to produce gas vesicles. This Haloferax mediterranei (strain ATCC 33500 / DSM 1411 / JCM 8866 / NBRC 14739 / NCIMB 2177 / R-4) (Halobacterium mediterranei) protein is Gas vesicle protein I.